The sequence spans 291 residues: 33 kDa chaperonin (291 aa).

2 disulfides stabilise this stretch: Cys237–Cys239 and Cys270–Cys273.

It belongs to the HSP33 family. Post-translationally, under oxidizing conditions two disulfide bonds are formed involving the reactive cysteines. Under reducing conditions zinc is bound to the reactive cysteines and the protein is inactive.

It localises to the cytoplasm. Redox regulated molecular chaperone. Protects both thermally unfolding and oxidatively damaged proteins from irreversible aggregation. Plays an important role in the bacterial defense system toward oxidative stress. The chain is 33 kDa chaperonin from Bacillus anthracis (strain A0248).